The primary structure comprises 344 residues: Phosphate acyltransferase (344 aa).

This sequence belongs to the PlsX family. In terms of assembly, homodimer. Probably interacts with PlsY.

The protein localises to the cytoplasm. It carries out the reaction a fatty acyl-[ACP] + phosphate = an acyl phosphate + holo-[ACP]. The protein operates within lipid metabolism; phospholipid metabolism. Its function is as follows. Catalyzes the reversible formation of acyl-phosphate (acyl-PO(4)) from acyl-[acyl-carrier-protein] (acyl-ACP). This enzyme utilizes acyl-ACP as fatty acyl donor, but not acyl-CoA. The protein is Phosphate acyltransferase of Sodalis glossinidius (strain morsitans).